A 351-amino-acid chain; its full sequence is Dihydroorotate dehydrogenase (quinone) (351 aa).

Residues 65–69 (AGLDK) and Thr89 each bind FMN. Lys69 is a binding site for substrate. Residue 114–118 (NRLGF) coordinates substrate. FMN is bound by residues Asn150 and Asn183. Asn183 serves as a coordination point for substrate. Catalysis depends on Ser186, which acts as the Nucleophile. Residue Asn188 coordinates substrate. Positions 228 and 256 each coordinate FMN. Residue 257–258 (NT) coordinates substrate. Residues Gly279, Gly308, and 329 to 330 (YT) contribute to the FMN site.

Belongs to the dihydroorotate dehydrogenase family. Type 2 subfamily. In terms of assembly, monomer. Requires FMN as cofactor.

The protein resides in the cell membrane. The enzyme catalyses (S)-dihydroorotate + a quinone = orotate + a quinol. Its pathway is pyrimidine metabolism; UMP biosynthesis via de novo pathway; orotate from (S)-dihydroorotate (quinone route): step 1/1. Functionally, catalyzes the conversion of dihydroorotate to orotate with quinone as electron acceptor. This Acidovorax sp. (strain JS42) protein is Dihydroorotate dehydrogenase (quinone).